The chain runs to 88 residues: uncharacterized protein (88 aa).

The next 2 helical transmembrane spans lie at 5 to 25 (AIPFFEFFLPFIPHYAFLLFV) and 36 to 56 (CYYLVCVLKLNCAFFFMVMIF).

The protein localises to the membrane. This is an uncharacterized protein from Saccharomyces cerevisiae (strain ATCC 204508 / S288c) (Baker's yeast).